The primary structure comprises 185 residues: MGMSAAQSHPNIITTTADWLFSWARRSSLWWLQFGLACCAIEMISSAMPRFDLAERFGMLYRASPRQADLMIVAGTVTKKMAPVVRQLYDQMADPKWVISMGSCANVGGPFDTYAVVQGVDQVIPVDIYVPGCPPVPEALYYGVLELQNRIIRYERLKERYGPEAAEAYREEERQAARSALGPRS.

Positions 38, 39, 104, and 133 each coordinate [4Fe-4S] cluster. Residues 165-176 (AAEAYREEERQA) show a composition bias toward basic and acidic residues. A disordered region spans residues 165–185 (AAEAYREEERQAARSALGPRS).

The protein belongs to the complex I 20 kDa subunit family. NDH-1 is composed of 14 different subunits. Subunits NuoB, C, D, E, F, and G constitute the peripheral sector of the complex. The cofactor is [4Fe-4S] cluster.

Its subcellular location is the cell membrane. The catalysed reaction is a quinone + NADH + 5 H(+)(in) = a quinol + NAD(+) + 4 H(+)(out). NDH-1 shuttles electrons from NADH, via FMN and iron-sulfur (Fe-S) centers, to quinones in the respiratory chain. The immediate electron acceptor for the enzyme in this species is believed to be ubiquinone. Couples the redox reaction to proton translocation (for every two electrons transferred, four hydrogen ions are translocated across the cytoplasmic membrane), and thus conserves the redox energy in a proton gradient. This Thermomicrobium roseum (strain ATCC 27502 / DSM 5159 / P-2) protein is NADH-quinone oxidoreductase subunit B.